Here is a 114-residue protein sequence, read N- to C-terminus: Iron-sulfur cluster insertion protein ErpA (114 aa).

Cys-42, Cys-106, and Cys-108 together coordinate iron-sulfur cluster.

The protein belongs to the HesB/IscA family. As to quaternary structure, homodimer. Requires iron-sulfur cluster as cofactor.

In terms of biological role, required for insertion of 4Fe-4S clusters for at least IspG. In Erwinia tasmaniensis (strain DSM 17950 / CFBP 7177 / CIP 109463 / NCPPB 4357 / Et1/99), this protein is Iron-sulfur cluster insertion protein ErpA.